The following is a 114-amino-acid chain: Protein ELF4-LIKE 4 (114 aa).

Positions 87–114 are disordered; the sequence is SVDASSEGESSGTLKSDGKANQKRFRSG. Positions 89 to 100 are enriched in polar residues; that stretch reads DASSEGESSGTL.

It belongs to the EARLY FLOWERING 4 family. Homodimer.

The protein resides in the nucleus. In terms of biological role, component of the central CCA1/LHY-TOC1 feedback loop in the circadian clock that promotes clock accuracy and is required for sustained rhythms in the absence of daily light/dark cycles. This chain is Protein ELF4-LIKE 4 (EFL4), found in Arabidopsis thaliana (Mouse-ear cress).